The sequence spans 1698 residues: Protein 4.1 homolog (1698 aa).

The disordered stretch occupies residues 1–31 (MPAEIKPSAPAEPETPTKSKPKSSSSSHGKP). The segment covering 12-27 (EPETPTKSKPKSSSSS) has biased composition (low complexity). The FERM domain occupies 32-314 (ALARVTLLDG…EHHTFFRLMT (283 aa)). The interval 317–434 (PVSKSKMFPV…KEEKERKERE (118 aa)) is hydrophilic. Disordered regions lie at residues 335–361 (GRTQ…SGAR) and 374–710 (EKEK…SDPT). Residues 374-448 (EKEKVARKSS…EEKKKAEKAA (75 aa)) are compositionally biased toward basic and acidic residues. Residues 449–461 (KAALAAGAAAGAA) are compositionally biased toward low complexity. A phosphoserine mark is found at Ser-471, Ser-474, and Ser-478. Positions 499–514 (KDGKDKSGKDKDKEVG) are enriched in basic and acidic residues. The segment covering 562–571 (DGNTSPTRKS) has biased composition (polar residues). At Ser-566 the chain carries Phosphoserine. Over residues 579 to 589 (YDQDPNSRKSG) the composition is skewed to basic and acidic residues. Positions 594–603 (EQLSPTSQQK) are enriched in polar residues. The span at 618–627 (ALKETAEKLK) shows a compositional bias: basic and acidic residues. Residues Ser-659 and Ser-687 each carry the phosphoserine modification. Positions 684–696 (RSYSPTKGPQGYS) are enriched in polar residues. Thr-689 is modified (phosphothreonine). Phosphoserine is present on residues Ser-697, Ser-1398, Ser-1401, and Ser-1402. A C-terminal (CTD) region spans residues 1286-1698 (GEIVQVDPND…EKIEIQQQTQ (413 aa)). Position 1407 is a phosphothreonine (Thr-1407). Basic and acidic residues predominate over residues 1509–1532 (LGKNAKTEQLEEKTVATTRTHDPN). The tract at residues 1509-1599 (LGKNAKTEQL…SPLFTTSATT (91 aa)) is disordered. Residues 1533–1554 (KQQQRVVTQEVKTTATVTSGDQ) are compositionally biased toward polar residues. Over residues 1561 to 1571 (VSSTSSGDSGT) the composition is skewed to low complexity. A compositionally biased stretch (polar residues) spans 1584-1599 (RTDNQKSPLFTTSATT). A Phosphoserine modification is found at Ser-1590.

In terms of tissue distribution, at onset of germ band retraction, expression is seen in epidermis, hindgut and foregut. During retraction, expression extends to tracheal branches and salivary glands.

It is found in the cell junction. It localises to the septate junction. An integral component of the septate junction. May play a role in cell-cell interactions that are necessary for proper development. Vital for embryonic development. This Drosophila melanogaster (Fruit fly) protein is Protein 4.1 homolog (cora).